The primary structure comprises 234 residues: Large ribosomal subunit protein uL1 (234 aa).

Belongs to the universal ribosomal protein uL1 family. Part of the 50S ribosomal subunit.

Its function is as follows. Binds directly to 23S rRNA. The L1 stalk is quite mobile in the ribosome, and is involved in E site tRNA release. In terms of biological role, protein L1 is also a translational repressor protein, it controls the translation of the L11 operon by binding to its mRNA. The chain is Large ribosomal subunit protein uL1 from Corynebacterium aurimucosum (strain ATCC 700975 / DSM 44827 / CIP 107346 / CN-1) (Corynebacterium nigricans).